The primary structure comprises 459 residues: Neuronal acetylcholine receptor subunit beta-2 (459 aa).

Residues 1-203 (LRSDFLLGPE…ITYDFVIKRK (203 aa)) are Extracellular-facing. N-linked (GlcNAc...) asparagine glycans are attached at residues Asn21 and Asn138. A disulfide bridge connects residues Cys125 and Cys139. The helical transmembrane segment at 204 to 228 (PLFYTINLIIPCVLITSLAILVFYL) threads the bilayer. At 229 to 235 (PSDCGEK) the chain is on the cytoplasmic side. Residues 236-254 (VTLCMSVLLALTVFLLLIS) traverse the membrane as a helical segment. Topologically, residues 255 to 269 (KIVPPTSLAVPLIGK) are extracellular. Residues 270-291 (YLMFTMVLVTFSIVTSVCVLNV) form a helical membrane-spanning segment. Residues 292–421 (HHRSPSTHYM…WKYVAMVIDR (130 aa)) lie on the Cytoplasmic side of the membrane. The helical transmembrane segment at 422 to 440 (LFLWIFILVCVVGTLGLFV) threads the bilayer.

This sequence belongs to the ligand-gated ion channel (TC 1.A.9) family. Acetylcholine receptor (TC 1.A.9.1) subfamily. Beta-2/CHRNB2 sub-subfamily. In terms of assembly, neuronal AChR is a heteropentamer composed of two different types of subunits: alpha and beta. CHRNB2/Beta-2 subunit can be combined to CHRNA2/alpha-2, CHRNA3/alpha-3 or CHRNA4/alpha-4, CHRNA5/alpha-5, CHRNA6/alpha-6 and CHRNB3/beta-3 to give rise to functional receptors.

It localises to the synaptic cell membrane. It is found in the cell membrane. The enzyme catalyses Ca(2+)(in) = Ca(2+)(out). It carries out the reaction K(+)(in) = K(+)(out). It catalyses the reaction Na(+)(in) = Na(+)(out). Its activity is regulated as follows. Activated by a myriad of ligands such as acetylcholine, cytisine, nicotine, choline and epibatidine. nAChR activity is inhibited by the antagonist alpha-conotoxins BuIA, PnIA, PnIC, GID and MII, small disulfide-constrained peptides from cone snails. Component of neuronal acetylcholine receptors (nAChRs) that function as pentameric, ligand-gated cation channels with high calcium permeability among other activities. nAChRs are excitatory neurotrasnmitter receptors formed by a collection of nAChR subunits known to mediate synaptic transmission in the nervous system and the neuromuscular junction. Each nAchR subunit confers differential attributes to channel properties, including activation, deactivation and desensitization kinetics, pH sensitivity, cation permeability, and binding to allosteric modulators. CHRNB2 forms heteropentameric neuronal acetylcholine receptors with CHRNA2, CHRNA3, CHRNA4 and CHRNA6, as well as CHRNA5 and CHRNB3 as accesory subunits. This Carassius auratus (Goldfish) protein is Neuronal acetylcholine receptor subunit beta-2 (chrnb2).